Reading from the N-terminus, the 738-residue chain is NAD(P)H-quinone oxidoreductase subunit 5, chloroplastic (738 aa).

A run of 17 helical transmembrane segments spans residues 9 to 29 (WVIPLLPLPVIMSMGFGLFLI), 39 to 59 (IWAFPSILLLSIAMVFSLHLS), 89 to 109 (VDPLTSIMLILITTVGILVLI), 125 to 145 (FVYISFFNTSMLGLVTSSNLI), 147 to 167 (IYFFWELVGMCSYLLIGFWFT), 185 to 205 (GDFGLLLGILGFFWITGSLEF), 219 to 239 (NGINSLLTTLCAFLLFLGAVA), 258 to 278 (TPISALIHAATMVAAGIFLLA), 280 to 300 (LLPLFISLPLLMSFISLVGTI), 327 to 347 (LGYMMLALGIGSYQAALFHLI), 354 to 374 (ALLFLGSGSVIHSMEPLVGYS), 396 to 416 (TTFLCGTLSLCGIPPLACFWS), 425 to 445 (WLYSPFFGIIASFTAGLTAFY), 542 to 562 (LFPLLILLLFTLFIGSIGIPF), 610 to 630 (SLAIFGLFIAYIFYGSAYSFF), 691 to 711 (GVIDGIINGVGLAGFCIGEEI), and 717 to 737 (GRISSYLFFFLCYVSLFLFFI).

It belongs to the complex I subunit 5 family. As to quaternary structure, NDH is composed of at least 16 different subunits, 5 of which are encoded in the nucleus.

It is found in the plastid. The protein resides in the chloroplast thylakoid membrane. It carries out the reaction a plastoquinone + NADH + (n+1) H(+)(in) = a plastoquinol + NAD(+) + n H(+)(out). The catalysed reaction is a plastoquinone + NADPH + (n+1) H(+)(in) = a plastoquinol + NADP(+) + n H(+)(out). Its function is as follows. NDH shuttles electrons from NAD(P)H:plastoquinone, via FMN and iron-sulfur (Fe-S) centers, to quinones in the photosynthetic chain and possibly in a chloroplast respiratory chain. The immediate electron acceptor for the enzyme in this species is believed to be plastoquinone. Couples the redox reaction to proton translocation, and thus conserves the redox energy in a proton gradient. The chain is NAD(P)H-quinone oxidoreductase subunit 5, chloroplastic (ndhF) from Saccharum officinarum (Sugarcane).